Here is a 503-residue protein sequence, read N- to C-terminus: Na(+)-translocating NADH-quinone reductase subunit B (503 aa).

5 helical membrane-spanning segments follow: residues 55–75 (MMLV…NSGV), 94–114 (ISGF…FSIL), 120–140 (IFLP…VLFA), 161–181 (TLPP…GVVV), and 186–206 (FGGT…FLFF). Residue Thr248 is modified to FMN phosphoryl threonine. A run of 5 helical transmembrane segments spans residues 361–381 (TSTF…IASW), 387–407 (FGIG…LIVG), 417–437 (FFIP…LVFM), 452–472 (WIYG…NPAY), and 475–495 (GVML…YFAV).

This sequence belongs to the NqrB/RnfD family. As to quaternary structure, composed of six subunits; NqrA, NqrB, NqrC, NqrD, NqrE and NqrF. It depends on FMN as a cofactor.

It localises to the cell inner membrane. It carries out the reaction a ubiquinone + n Na(+)(in) + NADH + H(+) = a ubiquinol + n Na(+)(out) + NAD(+). In terms of biological role, NQR complex catalyzes the reduction of ubiquinone-1 to ubiquinol by two successive reactions, coupled with the transport of Na(+) ions from the cytoplasm to the periplasm. NqrA to NqrE are probably involved in the second step, the conversion of ubisemiquinone to ubiquinol. The sequence is that of Na(+)-translocating NADH-quinone reductase subunit B from Chlamydia caviae (strain ATCC VR-813 / DSM 19441 / 03DC25 / GPIC) (Chlamydophila caviae).